The following is a 340-amino-acid chain: Phosphate acyltransferase (340 aa).

Belongs to the PlsX family. Homodimer. Probably interacts with PlsY.

The protein resides in the cytoplasm. It catalyses the reaction a fatty acyl-[ACP] + phosphate = an acyl phosphate + holo-[ACP]. Its pathway is lipid metabolism; phospholipid metabolism. In terms of biological role, catalyzes the reversible formation of acyl-phosphate (acyl-PO(4)) from acyl-[acyl-carrier-protein] (acyl-ACP). This enzyme utilizes acyl-ACP as fatty acyl donor, but not acyl-CoA. This chain is Phosphate acyltransferase, found in Nitrosococcus oceani (strain ATCC 19707 / BCRC 17464 / JCM 30415 / NCIMB 11848 / C-107).